The following is a 92-amino-acid chain: uncharacterized protein (92 aa).

This is an uncharacterized protein from Saccharomyces cerevisiae (strain ATCC 204508 / S288c) (Baker's yeast).